Here is a 579-residue protein sequence, read N- to C-terminus: Carotenoid-cleaving dioxygenase, mitochondrial (579 aa).

Fe cation contacts are provided by His226, His286, His357, and His573.

Belongs to the carotenoid oxygenase family. The cofactor is Fe(2+). As to expression, highly expressed in retinal pigment epithelium. Also expressed in stomach, small intestine, liver, testis, kidney, adrenal gland, pancreas, heart, skeletal muscle and prostate (at protein level).

Its subcellular location is the mitochondrion. The enzyme catalyses all-trans-beta-carotene + O2 = beta-ionone + all-trans-10'-apo-beta-carotenal. It carries out the reaction 5-cis-lycopene + O2 = 5-cis-10'-apo-lycopenal + (3E,5E)-6,10-dimethylundeca-3,5,9-trien-2-one. It catalyses the reaction 13-cis-lycopene + O2 = 13-cis-10'-apo-lycopenal + (3E,5E)-6,10-dimethylundeca-3,5,9-trien-2-one. The catalysed reaction is lutein + O2 = (3R,6R)-hydroxy-alpha-ionone + (3R)-3-hydroxy-10'-apo-beta-carotenal. The enzyme catalyses lutein + O2 = (3R,6R)-3-hydroxy-10'-apo-alpha-carotenal + (3R)-hydroxy-beta-ionone. It carries out the reaction all-trans-zeaxanthin + 2 O2 = 4,9-dimethyldodeca-2,4,6,8,10-pentaenedial + 2 (3R)-hydroxy-beta-ionone. It catalyses the reaction all-trans-zeaxanthin + O2 = (3R)-3-hydroxy-10'-apo-beta-carotenal + (3R)-hydroxy-beta-ionone. The catalysed reaction is beta-cryptoxanthin + O2 = all-trans-10'-apo-beta-carotenal + (3R)-hydroxy-beta-ionone. The enzyme catalyses all-trans-10'-apo-beta-carotenal + O2 = beta-ionone + 4,9-dimethyldodeca-2,4,6,8,10-pentaenedial. It carries out the reaction (3R)-3-hydroxy-10'-apo-beta-carotenal + O2 = 4,9-dimethyldodeca-2,4,6,8,10-pentaenedial + (3R)-hydroxy-beta-ionone. It catalyses the reaction (3R,6R)-3-hydroxy-10'-apo-alpha-carotenal + O2 = (3R,6R)-hydroxy-alpha-ionone + 4,9-dimethyldodeca-2,4,6,8,10-pentaenedial. Broad specificity mitochondrial dioxygenase that mediates the asymmetric oxidative cleavage of carotenoids. Cleaves carotenes (pure hydrocarbon carotenoids) such as all-trans-beta-carotene and lycopene as well as xanthophylls (oxygenated carotenoids) such as zeaxanthin, lutein and beta-cryptoxanthin at both the 9,10 and the 9',10' carbon-carbon double bond. Through its function in carotenoids metabolism regulates oxidative stress and the production of important signaling molecules. The sequence is that of Carotenoid-cleaving dioxygenase, mitochondrial from Homo sapiens (Human).